An 899-amino-acid chain; its full sequence is Translation initiation factor IF-2 (899 aa).

2 disordered regions span residues 65-84 and 91-310; these read KTRSTLNVPSTGGKSKSVQI and TYVK…SFNK. Residues 68-82 show a composition bias toward polar residues; the sequence is STLNVPSTGGKSKSV. Residues 108-164 are compositionally biased toward basic and acidic residues; sequence QARREAEEQAQRAAEEQAKREAELREAAEKAKRAADEQAKREAAEKAKRDVAEKEKV. Positions 165–174 are enriched in polar residues; that stretch reads TNQQNENMTK. Positions 177–236 are enriched in basic and acidic residues; that stretch reads QAEKAKREAEAAELKRKAEEAARLKVEEEARRIAEEARRMAEENAGRWEAESAKPEESAD. A compositionally biased stretch (basic residues) spans 262–276; it reads SRSRAGKVTKQKKGN. A compositionally biased stretch (basic and acidic residues) spans 277-290; the sequence is RQSESKADREEARA. Residues 398 to 567 enclose the tr-type G domain; it reads ARAPVVTIMG…LLQAEVLELK (170 aa). The segment at 407–414 is G1; that stretch reads GHVDHGKT. 407–414 serves as a coordination point for GTP; that stretch reads GHVDHGKT. The segment at 432–436 is G2; it reads GITQH. The tract at residues 453 to 456 is G3; that stretch reads DTPG. GTP contacts are provided by residues 453–457 and 507–510; these read DTPGH and NKID. A G4 region spans residues 507-510; it reads NKID. The interval 543–545 is G5; the sequence is SAK.

This sequence belongs to the TRAFAC class translation factor GTPase superfamily. Classic translation factor GTPase family. IF-2 subfamily.

The protein localises to the cytoplasm. In terms of biological role, one of the essential components for the initiation of protein synthesis. Protects formylmethionyl-tRNA from spontaneous hydrolysis and promotes its binding to the 30S ribosomal subunits. Also involved in the hydrolysis of GTP during the formation of the 70S ribosomal complex. This Pectobacterium carotovorum subsp. carotovorum (strain PC1) protein is Translation initiation factor IF-2.